We begin with the raw amino-acid sequence, 237 residues long: UDP-2,3-diacylglucosamine hydrolase (237 aa).

Mn(2+) contacts are provided by Asp-9, His-11, Asp-42, Asn-80, and His-115. 80–81 contributes to the substrate binding site; it reads NR. Positions 123, 161, 165, 168, and 196 each coordinate substrate. 2 residues coordinate Mn(2+): His-196 and His-198.

The protein belongs to the LpxH family. Mn(2+) is required as a cofactor.

The protein resides in the cell inner membrane. Its subcellular location is the cytoplasm. It catalyses the reaction UDP-2-N,3-O-bis[(3R)-3-hydroxytetradecanoyl]-alpha-D-glucosamine + H2O = 2-N,3-O-bis[(3R)-3-hydroxytetradecanoyl]-alpha-D-glucosaminyl 1-phosphate + UMP + 2 H(+). Its pathway is glycolipid biosynthesis; lipid IV(A) biosynthesis; lipid IV(A) from (3R)-3-hydroxytetradecanoyl-[acyl-carrier-protein] and UDP-N-acetyl-alpha-D-glucosamine: step 4/6. Functionally, hydrolyzes the pyrophosphate bond of UDP-2,3-diacylglucosamine to yield 2,3-diacylglucosamine 1-phosphate (lipid X) and UMP by catalyzing the attack of water at the alpha-P atom. Involved in the biosynthesis of lipid A, a phosphorylated glycolipid that anchors the lipopolysaccharide to the outer membrane of the cell. This is UDP-2,3-diacylglucosamine hydrolase from Haemophilus influenzae (strain ATCC 51907 / DSM 11121 / KW20 / Rd).